Consider the following 208-residue polypeptide: Uracil phosphoribosyltransferase (208 aa).

Residues Arg78, Arg103, and Asp130–Ser138 each bind 5-phospho-alpha-D-ribose 1-diphosphate. Residues Ile193 and Gly198–Ala200 each bind uracil. Position 199 (Asp199) interacts with 5-phospho-alpha-D-ribose 1-diphosphate.

Belongs to the UPRTase family. Requires Mg(2+) as cofactor.

The enzyme catalyses UMP + diphosphate = 5-phospho-alpha-D-ribose 1-diphosphate + uracil. Its pathway is pyrimidine metabolism; UMP biosynthesis via salvage pathway; UMP from uracil: step 1/1. With respect to regulation, allosterically activated by GTP. In terms of biological role, catalyzes the conversion of uracil and 5-phospho-alpha-D-ribose 1-diphosphate (PRPP) to UMP and diphosphate. The chain is Uracil phosphoribosyltransferase from Pasteurella multocida (strain Pm70).